The chain runs to 371 residues: 4-hydroxyphenylpyruvate dioxygenase-like protein (371 aa).

2 VOC domains span residues 7 to 135 and 160 to 328; these read RLCH…LLQR and HVDH…VFTK. The Fe cation site is built by His-163, His-258, and Glu-339.

Belongs to the 4HPPD family. Requires Fe cation as cofactor.

It localises to the mitochondrion. It catalyses the reaction 3-(4-hydroxyphenyl)pyruvate + O2 = (S)-4-hydroxymandelate + CO2. Functionally, iron-dependent dioxygenase that catalyzes the conversion of 4-hydroxyphenylpyruvate (4-HPPA) to 4-hydroxymandelate (4-HMA) in the mitochondria, one of the steps in the biosynthesis of coenzyme Q10 from tyrosine. The polypeptide is 4-hydroxyphenylpyruvate dioxygenase-like protein (Mus musculus (Mouse)).